The following is a 264-amino-acid chain: Thymidylate synthase (264 aa).

Residue Arg21 coordinates dUMP. Position 51 (His51) interacts with (6R)-5,10-methylene-5,6,7,8-tetrahydrofolate. A dUMP-binding site is contributed by Arg126–Arg127. Cys146 functions as the Nucleophile in the catalytic mechanism. DUMP contacts are provided by residues Arg166–Asp169, Asn177, and His207–Tyr209. Residue Asp169 coordinates (6R)-5,10-methylene-5,6,7,8-tetrahydrofolate. (6R)-5,10-methylene-5,6,7,8-tetrahydrofolate is bound at residue Ser263.

This sequence belongs to the thymidylate synthase family. Bacterial-type ThyA subfamily. In terms of assembly, homodimer.

It localises to the cytoplasm. The catalysed reaction is dUMP + (6R)-5,10-methylene-5,6,7,8-tetrahydrofolate = 7,8-dihydrofolate + dTMP. It functions in the pathway pyrimidine metabolism; dTTP biosynthesis. Catalyzes the reductive methylation of 2'-deoxyuridine-5'-monophosphate (dUMP) to 2'-deoxythymidine-5'-monophosphate (dTMP) while utilizing 5,10-methylenetetrahydrofolate (mTHF) as the methyl donor and reductant in the reaction, yielding dihydrofolate (DHF) as a by-product. This enzymatic reaction provides an intracellular de novo source of dTMP, an essential precursor for DNA biosynthesis. This chain is Thymidylate synthase, found in Nitrosococcus oceani (strain ATCC 19707 / BCRC 17464 / JCM 30415 / NCIMB 11848 / C-107).